A 469-amino-acid polypeptide reads, in one-letter code: Neuraminidase (469 aa).

Over 1–9 (MNPNQKIIT) the chain is Intravirion. The chain crosses the membrane as a helical span at residues 10-30 (IGSVSLTFAAICFLMQIAILV). An involved in apical transport and lipid raft association region spans residues 11–33 (GSVSLTFAAICFLMQIAILVTTV). The Virion surface portion of the chain corresponds to 31–469 (TTVTLNFKQY…DGADINLMPI (439 aa)). The segment at 36–88 (NFKQYECDPPATNQVMPCEPIIIERNITEIVYLTNTTIEREICPKLVEYRNWS) is hypervariable stalk region. Residues asparagine 61, asparagine 70, and asparagine 86 are each glycosylated (N-linked (GlcNAc...) asparagine; by host). Residues 91 to 469 (QCKITGFAPF…DGADINLMPI (379 aa)) form a head of neuraminidase region. 8 cysteine pairs are disulfide-bonded: cysteine 92-cysteine 417, cysteine 124-cysteine 129, cysteine 183-cysteine 230, cysteine 232-cysteine 237, cysteine 278-cysteine 291, cysteine 280-cysteine 289, cysteine 318-cysteine 337, and cysteine 421-cysteine 447. Residue arginine 118 coordinates substrate. Asparagine 146 carries an N-linked (GlcNAc...) asparagine; by host glycan. Residue aspartate 151 is the Proton donor/acceptor of the active site. Arginine 152 is a substrate binding site. N-linked (GlcNAc...) asparagine; by host glycosylation is found at asparagine 200 and asparagine 234. 276–277 (EE) contributes to the substrate binding site. Substrate is bound at residue arginine 292. Ca(2+) is bound by residues aspartate 293 and glycine 297. An N-linked (GlcNAc...) asparagine; by host glycan is attached at asparagine 313. Aspartate 324 serves as a coordination point for Ca(2+). Arginine 371 contacts substrate. Asparagine 402 carries an N-linked (GlcNAc...) asparagine; by host glycan. Tyrosine 406 serves as the catalytic Nucleophile.

This sequence belongs to the glycosyl hydrolase 34 family. Homotetramer. It depends on Ca(2+) as a cofactor. In terms of processing, N-glycosylated.

The protein localises to the virion membrane. Its subcellular location is the host apical cell membrane. The enzyme catalyses Hydrolysis of alpha-(2-&gt;3)-, alpha-(2-&gt;6)-, alpha-(2-&gt;8)- glycosidic linkages of terminal sialic acid residues in oligosaccharides, glycoproteins, glycolipids, colominic acid and synthetic substrates.. Its activity is regulated as follows. Inhibited by the neuraminidase inhibitors zanamivir (Relenza) and oseltamivir (Tamiflu). These drugs interfere with the release of progeny virus from infected cells and are effective against all influenza strains. Resistance to neuraminidase inhibitors is quite rare. In terms of biological role, catalyzes the removal of terminal sialic acid residues from viral and cellular glycoconjugates. Cleaves off the terminal sialic acids on the glycosylated HA during virus budding to facilitate virus release. Additionally helps virus spread through the circulation by further removing sialic acids from the cell surface. These cleavages prevent self-aggregation and ensure the efficient spread of the progeny virus from cell to cell. Otherwise, infection would be limited to one round of replication. Described as a receptor-destroying enzyme because it cleaves a terminal sialic acid from the cellular receptors. May facilitate viral invasion of the upper airways by cleaving the sialic acid moieties on the mucin of the airway epithelial cells. Likely to plays a role in the budding process through its association with lipid rafts during intracellular transport. May additionally display a raft-association independent effect on budding. Plays a role in the determination of host range restriction on replication and virulence. Sialidase activity in late endosome/lysosome traffic seems to enhance virus replication. This Influenza A virus (strain A/Swine/Kanagawa/2/1978 H1N2) protein is Neuraminidase.